Consider the following 381-residue polypeptide: MKYALINCVIYTKYDVLRDFAVIINGEIIEAVIPQAELETGIKTIDLQGNNLTAGFIDLQLNGCGGVMFNDQTSVETLEIMQETNLKSGCTSFLPTFITAPDENIKSAVKIMREYLNKHKNQALGLHIEGPYLSIEKKGVHRPEYIREITPEMKDFLCENGDVITKMTIAAENPTINYTPDFVKAGIIVSVGHSNATYEVAKAAFHKGATFATHLHNAMSPISSGREMGVVGAVLDSDVYTGIIVDGVHINYGNVRIDKKIKGDKLCIVTDSIAAAGAPPELESFTFVGKTIYIKEGRCYDANDTIAGASITMMESIKNAVEYVEIPLAEAIRMSNLYPARAIGIDDRLGSVEKGKIANLAVFTPNYQVIGTVVNGKWKEN.

E129 serves as a coordination point for a divalent metal cation. 140-141 (VH) is a substrate binding site. 2 residues coordinate a divalent metal cation: H193 and H214. Residues 217 to 218 (NA), R226, and 246 to 249 (DGVH) contribute to the substrate site. The Proton donor/acceptor role is filled by D271. 306 to 308 (IAG) provides a ligand contact to substrate.

This sequence belongs to the metallo-dependent hydrolases superfamily. NagA family. Homotetramer. The cofactor is a divalent metal cation.

The enzyme catalyses N-acetyl-D-glucosamine 6-phosphate + H2O = D-glucosamine 6-phosphate + acetate. The protein operates within amino-sugar metabolism; N-acetylneuraminate degradation; D-fructose 6-phosphate from N-acetylneuraminate: step 4/5. Its function is as follows. Involved in the first committed step in the biosynthesis of amino-sugar-nucleotides. Catalyzes the hydrolysis of the N-acetyl group of N-acetylglucosamine-6-phosphate (GlcNAc-6-P) to yield glucosamine 6-phosphate and acetate. This is N-acetylglucosamine-6-phosphate deacetylase (nagA) from Haemophilus influenzae (strain ATCC 51907 / DSM 11121 / KW20 / Rd).